Consider the following 156-residue polypeptide: Ribosomal RNA large subunit methyltransferase H (156 aa).

S-adenosyl-L-methionine is bound by residues Leu73, Gly104, and 123 to 128 (LSPLTL).

It belongs to the RNA methyltransferase RlmH family. Homodimer.

It is found in the cytoplasm. It carries out the reaction pseudouridine(1915) in 23S rRNA + S-adenosyl-L-methionine = N(3)-methylpseudouridine(1915) in 23S rRNA + S-adenosyl-L-homocysteine + H(+). In terms of biological role, specifically methylates the pseudouridine at position 1915 (m3Psi1915) in 23S rRNA. This is Ribosomal RNA large subunit methyltransferase H from Yersinia pseudotuberculosis serotype O:1b (strain IP 31758).